The primary structure comprises 102 residues: Small ribosomal subunit protein uS10 (102 aa).

It belongs to the universal ribosomal protein uS10 family. In terms of assembly, part of the 30S ribosomal subunit.

In terms of biological role, involved in the binding of tRNA to the ribosomes. The sequence is that of Small ribosomal subunit protein uS10 from Streptococcus thermophilus (strain ATCC BAA-250 / LMG 18311).